The primary structure comprises 198 residues: TATA-box-binding protein (198 aa).

2 repeat units span residues Ile-14–Leu-90 and Ile-105–Leu-181.

This sequence belongs to the TBP family.

In terms of biological role, general factor that plays a role in the activation of archaeal genes transcribed by RNA polymerase. Binds specifically to the TATA box promoter element which lies close to the position of transcription initiation. This Saccharolobus shibatae (strain ATCC 51178 / DSM 5389 / JCM 8931 / NBRC 15437 / B12) (Sulfolobus shibatae) protein is TATA-box-binding protein.